Here is a 58-residue protein sequence, read N- to C-terminus: Large ribosomal subunit protein uL30 (58 aa).

The protein belongs to the universal ribosomal protein uL30 family. As to quaternary structure, part of the 50S ribosomal subunit.

This chain is Large ribosomal subunit protein uL30, found in Pseudomonas savastanoi pv. phaseolicola (strain 1448A / Race 6) (Pseudomonas syringae pv. phaseolicola (strain 1448A / Race 6)).